Reading from the N-terminus, the 56-residue chain is Large ribosomal subunit protein bL32 (56 aa).

The disordered stretch occupies residues 1-21; sequence MAVQKNKPTRSKRGMRRSHDA. The segment covering 7–16 has biased composition (basic residues); it reads KPTRSKRGMR.

The protein belongs to the bacterial ribosomal protein bL32 family.

This is Large ribosomal subunit protein bL32 from Hamiltonella defensa subsp. Acyrthosiphon pisum (strain 5AT).